A 201-amino-acid chain; its full sequence is Recombination protein RecR (201 aa).

Residues 60–75 form a C4-type zinc finger; it reads CSRCFHFTDAEECSIC. The Toprim domain maps to 83 to 178; that stretch reads GEICVVETTA…RVSRIAYGIP (96 aa).

Belongs to the RecR family.

May play a role in DNA repair. It seems to be involved in an RecBC-independent recombinational process of DNA repair. It may act with RecF and RecO. This Syntrophobacter fumaroxidans (strain DSM 10017 / MPOB) protein is Recombination protein RecR.